The primary structure comprises 598 residues: Elongation factor 4 (598 aa).

One can recognise a tr-type G domain in the interval 2–184 (KNIRNFSIIA…EIVAKIPAPE (183 aa)). Residues 14–19 (DHGKST) and 131–134 (NKID) each bind GTP.

The protein belongs to the TRAFAC class translation factor GTPase superfamily. Classic translation factor GTPase family. LepA subfamily.

It is found in the cell inner membrane. It carries out the reaction GTP + H2O = GDP + phosphate + H(+). Required for accurate and efficient protein synthesis under certain stress conditions. May act as a fidelity factor of the translation reaction, by catalyzing a one-codon backward translocation of tRNAs on improperly translocated ribosomes. Back-translocation proceeds from a post-translocation (POST) complex to a pre-translocation (PRE) complex, thus giving elongation factor G a second chance to translocate the tRNAs correctly. Binds to ribosomes in a GTP-dependent manner. The polypeptide is Elongation factor 4 (Haemophilus influenzae (strain 86-028NP)).